Consider the following 229-residue polypeptide: Ribose-5-phosphate isomerase A (229 aa).

Residues 28–31 (TGST), 85–88 (DGAD), and 98–101 (KGRG) each bind substrate. Residue Glu-107 is the Proton acceptor of the active site. Lys-125 is a substrate binding site.

The protein belongs to the ribose 5-phosphate isomerase family. In terms of assembly, homodimer.

The enzyme catalyses aldehydo-D-ribose 5-phosphate = D-ribulose 5-phosphate. The protein operates within carbohydrate degradation; pentose phosphate pathway; D-ribose 5-phosphate from D-ribulose 5-phosphate (non-oxidative stage): step 1/1. Functionally, catalyzes the reversible conversion of ribose-5-phosphate to ribulose 5-phosphate. The protein is Ribose-5-phosphate isomerase A of Thermococcus kodakarensis (strain ATCC BAA-918 / JCM 12380 / KOD1) (Pyrococcus kodakaraensis (strain KOD1)).